The primary structure comprises 23 residues: Caerin-4.3 (23 aa).

Expressed by the skin parotoid and/or rostral glands.

It localises to the secreted. In terms of biological role, antibacterial peptide, that adopts an alpha helical conformation which can disrupt bacterial membranes. Each caerin displays a different antimicrobial specificity. The sequence is that of Caerin-4.3 from Ranoidea caerulea (Green tree frog).